A 523-amino-acid polypeptide reads, in one-letter code: DNA primase (523 aa).

The segment at 37–61 (CPFHAEKTPSFFVNPLQGYFYCFGC) adopts a CHC2-type zinc-finger fold. Residues 259–340 (KSVILVEGYI…NVSVVRMDFG (82 aa)) form the Toprim domain. Residues E265, D309, and D311 each contribute to the Mg(2+) site.

The protein belongs to the DnaG primase family. In terms of assembly, monomer. Interacts with DnaB. Requires Zn(2+) as cofactor. It depends on Mg(2+) as a cofactor.

It catalyses the reaction ssDNA + n NTP = ssDNA/pppN(pN)n-1 hybrid + (n-1) diphosphate.. In terms of biological role, RNA polymerase that catalyzes the synthesis of short RNA molecules used as primers for DNA polymerase during DNA replication. The polypeptide is DNA primase (Borreliella burgdorferi (strain ATCC 35210 / DSM 4680 / CIP 102532 / B31) (Borrelia burgdorferi)).